We begin with the raw amino-acid sequence, 347 residues long: Putative histone PARylation factor 1-like (347 aa).

Met-1 bears the N-acetylmethionine mark. An N6-acetyllysine mark is found at Lys-187 and Lys-234.

Belongs to the HPF1 family.

This chain is Putative histone PARylation factor 1-like, found in Homo sapiens (Human).